A 633-amino-acid chain; its full sequence is Threonine--tRNA ligase (633 aa).

The TGS domain occupies methionine 1 to threonine 61. The segment at aspartate 242–proline 533 is catalytic. 3 residues coordinate Zn(2+): cysteine 333, histidine 384, and histidine 510.

Belongs to the class-II aminoacyl-tRNA synthetase family. As to quaternary structure, homodimer. It depends on Zn(2+) as a cofactor.

The protein localises to the cytoplasm. The enzyme catalyses tRNA(Thr) + L-threonine + ATP = L-threonyl-tRNA(Thr) + AMP + diphosphate + H(+). Its function is as follows. Catalyzes the attachment of threonine to tRNA(Thr) in a two-step reaction: L-threonine is first activated by ATP to form Thr-AMP and then transferred to the acceptor end of tRNA(Thr). Also edits incorrectly charged L-seryl-tRNA(Thr). The chain is Threonine--tRNA ligase from Rickettsia bellii (strain OSU 85-389).